Consider the following 66-residue polypeptide: Large ribosomal subunit protein bL35 (66 aa).

2 stretches are compositionally biased toward basic residues: residues Met-1–Lys-16 and Lys-23–Arg-45. Positions Met-1 to Lys-66 are disordered.

It belongs to the bacterial ribosomal protein bL35 family.

This is Large ribosomal subunit protein bL35 from Lacticaseibacillus casei (strain BL23) (Lactobacillus casei).